The following is a 161-amino-acid chain: Lipoprotein signal peptidase (161 aa).

The next 4 helical transmembrane spans lie at 8 to 28 (LKYF…KYLA), 40 to 60 (ITSF…SLLS), 67 to 87 (QMIM…YLII), and 91 to 111 (ITEK…LGNF). Active-site residues include D122 and D140. The helical transmembrane segment at 136–156 (FNIADSAITCGVVILIAASLF) threads the bilayer.

It belongs to the peptidase A8 family.

It is found in the cell inner membrane. It catalyses the reaction Release of signal peptides from bacterial membrane prolipoproteins. Hydrolyzes -Xaa-Yaa-Zaa-|-(S,diacylglyceryl)Cys-, in which Xaa is hydrophobic (preferably Leu), and Yaa (Ala or Ser) and Zaa (Gly or Ala) have small, neutral side chains.. It functions in the pathway protein modification; lipoprotein biosynthesis (signal peptide cleavage). This protein specifically catalyzes the removal of signal peptides from prolipoproteins. The polypeptide is Lipoprotein signal peptidase (Francisella tularensis subsp. novicida (strain U112)).